Here is a 376-residue protein sequence, read N- to C-terminus: Protein-tyrosine sulfotransferase 2 (376 aa).

Topologically, residues 1-8 (MRLSVRKV) are cytoplasmic. A helical; Signal-anchor for type II membrane protein membrane pass occupies residues 9 to 25 (LLAAGCALALVLAVQLG). At 26 to 376 (QQVLECRAVL…NSTSPHLGSS (351 aa)) the chain is on the lumenal side. 3'-phosphoadenylyl sulfate is bound at residue 77–81 (RSGTT). Cysteine 95 and cysteine 155 are oxidised to a cystine. The Proton donor/acceptor role is filled by glutamate 98. Residues 100–104 (RIIPR) form an interaction with peptide substrate region. The 3'-phosphoadenylyl sulfate site is built by arginine 182, serine 190, and arginine 194. A disulfide bond links cysteine 224 and cysteine 232. 3'-phosphoadenylyl sulfate-binding positions include tyrosine 237, 284–293 (STDQVIKPVN), and lysine 299. N-linked (GlcNAc...) asparagine glycosylation is found at asparagine 342 and asparagine 367.

This sequence belongs to the protein sulfotransferase family. In terms of assembly, homodimer. Can also form heterodimers with TPST1. Post-translationally, N-glycosylated. In terms of tissue distribution, widely expressed.

It is found in the golgi apparatus membrane. The enzyme catalyses L-tyrosyl-[protein] + 3'-phosphoadenylyl sulfate = O-sulfo-L-tyrosine-[protein] + adenosine 3',5'-bisphosphate + H(+). Catalyzes the O-sulfation of tyrosine residues within acidic motifs of polypeptides, using 3'-phosphoadenylyl sulfate (PAPS) as cosubstrate. This is Protein-tyrosine sulfotransferase 2 (Tpst2) from Mus musculus (Mouse).